We begin with the raw amino-acid sequence, 22 residues long: Superoxide dismutase [Cu-Zn] (22 aa).

Belongs to the Cu-Zn superoxide dismutase family. In terms of assembly, homodimer. Cu cation is required as a cofactor. It depends on Zn(2+) as a cofactor.

It localises to the cytoplasm. The enzyme catalyses 2 superoxide + 2 H(+) = H2O2 + O2. Its function is as follows. Destroys radicals which are normally produced within the cells and which are toxic to biological systems. The polypeptide is Superoxide dismutase [Cu-Zn] (Hordeum vulgare (Barley)).